We begin with the raw amino-acid sequence, 597 residues long: Proline--tRNA ligase (597 aa).

It belongs to the class-II aminoacyl-tRNA synthetase family. ProS type 1 subfamily. Homodimer.

It is found in the cytoplasm. It carries out the reaction tRNA(Pro) + L-proline + ATP = L-prolyl-tRNA(Pro) + AMP + diphosphate. In terms of biological role, catalyzes the attachment of proline to tRNA(Pro) in a two-step reaction: proline is first activated by ATP to form Pro-AMP and then transferred to the acceptor end of tRNA(Pro). As ProRS can inadvertently accommodate and process non-cognate amino acids such as alanine and cysteine, to avoid such errors it has two additional distinct editing activities against alanine. One activity is designated as 'pretransfer' editing and involves the tRNA(Pro)-independent hydrolysis of activated Ala-AMP. The other activity is designated 'posttransfer' editing and involves deacylation of mischarged Ala-tRNA(Pro). The misacylated Cys-tRNA(Pro) is not edited by ProRS. This Bifidobacterium longum (strain NCC 2705) protein is Proline--tRNA ligase.